We begin with the raw amino-acid sequence, 103 residues long: MSTTRAIPVSLKDRSDIDFSTSLGGTLYGTTPGGTKIVYDRNALLQYRNSPLSKTPPPQLAHITNTELNKKVEKSTTTPTTTTPPTTTAKPKPTNDDDIFPME.

A disordered region spans residues 49 to 103 (NSPLSKTPPPQLAHITNTELNKKVEKSTTTPTTTTPPTTTAKPKPTNDDDIFPME). The span at 76 to 92 (TTTPTTTTPPTTTAKPK) shows a compositional bias: low complexity.

Belongs to the eIF4E-binding protein family.

In terms of biological role, regulates assembly of the eIF4F complex. The sequence is that of Eukaryotic translation initiation factor 4E-1A-binding protein homolog (febA) from Dictyostelium discoideum (Social amoeba).